The sequence spans 341 residues: MRPILLSGHERALTQVKFNPDGDLIFSVAKDQHICVWFAHNGERLGTYHGHQGAIWTVDCDPTSTIIATGSADNTIKLWEIKTGRCLHTWEFPTAVKRVEFSPDGTRLLGVTEKRMGHLGTIVVLDVKLDVDAEQNPERAMTIVCDESKATVAGWSYLAKYIIAGHEDGSVSQYDAKNGDQLHSVQIHDMGSEIRDLQWSQDRTYFITASKDKTAKLVTARDLEVLKTYPADTPLNSAVITPKKDYVILGGGQAAMDVTTTSARQGKFEARFYHKIFEDEIGRVRGHFGPLNYVAAEPNGKGYASGGEDGYVRVHQFDKGYFDFMYEVERERKNKMEQAQQ.

WD repeat units lie at residues 8-49 (GHER…GTYH), 50-91 (GHQG…HTWE), 145-184 (CDES…QLHS), 189-228 (DMGS…VLKT), and 286-325 (GHFG…FDFM).

The protein belongs to the eIF-3 subunit I family. Component of the eukaryotic translation initiation factor 3 (eIF-3) complex.

Its subcellular location is the cytoplasm. Component of the eukaryotic translation initiation factor 3 (eIF-3) complex, which is involved in protein synthesis of a specialized repertoire of mRNAs and, together with other initiation factors, stimulates binding of mRNA and methionyl-tRNAi to the 40S ribosome. The eIF-3 complex specifically targets and initiates translation of a subset of mRNAs involved in cell proliferation. This is Eukaryotic translation initiation factor 3 subunit I from Pyricularia oryzae (strain 70-15 / ATCC MYA-4617 / FGSC 8958) (Rice blast fungus).